Consider the following 180-residue polypeptide: ATP-dependent Clp protease proteolytic subunit 2 (180 aa).

Ser86 serves as the catalytic Nucleophile. The active site involves His111.

This sequence belongs to the peptidase S14 family. In terms of assembly, fourteen ClpP subunits assemble into 2 heptameric rings which stack back to back to give a disk-like structure with a central cavity, resembling the structure of eukaryotic proteasomes.

It localises to the cytoplasm. The catalysed reaction is Hydrolysis of proteins to small peptides in the presence of ATP and magnesium. alpha-casein is the usual test substrate. In the absence of ATP, only oligopeptides shorter than five residues are hydrolyzed (such as succinyl-Leu-Tyr-|-NHMec, and Leu-Tyr-Leu-|-Tyr-Trp, in which cleavage of the -Tyr-|-Leu- and -Tyr-|-Trp bonds also occurs).. In terms of biological role, cleaves peptides in various proteins in a process that requires ATP hydrolysis. Has a chymotrypsin-like activity. Plays a major role in the degradation of misfolded proteins. The sequence is that of ATP-dependent Clp protease proteolytic subunit 2 from Tropheryma whipplei (strain Twist) (Whipple's bacillus).